Here is a 193-residue protein sequence, read N- to C-terminus: NADH-quinone oxidoreductase subunit B (193 aa).

The [4Fe-4S] cluster site is built by C49, C50, C115, and C144. A disordered region spans residues 172-193 (FKKEEPREANAPVPVNTEMPLE).

Belongs to the complex I 20 kDa subunit family. As to quaternary structure, NDH-1 is composed of 14 different subunits. Subunits NuoB, C, D, E, F, and G constitute the peripheral sector of the complex. It depends on [4Fe-4S] cluster as a cofactor.

The protein localises to the cell inner membrane. The enzyme catalyses a quinone + NADH + 5 H(+)(in) = a quinol + NAD(+) + 4 H(+)(out). Its function is as follows. NDH-1 shuttles electrons from NADH, via FMN and iron-sulfur (Fe-S) centers, to quinones in the respiratory chain. The immediate electron acceptor for the enzyme in this species is believed to be ubiquinone. Couples the redox reaction to proton translocation (for every two electrons transferred, four hydrogen ions are translocated across the cytoplasmic membrane), and thus conserves the redox energy in a proton gradient. The sequence is that of NADH-quinone oxidoreductase subunit B from Akkermansia muciniphila (strain ATCC BAA-835 / DSM 22959 / JCM 33894 / BCRC 81048 / CCUG 64013 / CIP 107961 / Muc).